A 209-amino-acid chain; its full sequence is GTP-binding protein RHB1 (209 aa).

Methionine 1 is modified (N-acetylmethionine). Residues glycine 28, lysine 29, threonine 30, threonine 31, valine 42, tyrosine 45, threonine 48, aspartate 132, and alanine 172 each coordinate GTP. Threonine 30 is a binding site for Mg(2+). The Effector region motif lies at 45–53 (YYPTIENEF). Threonine 48 contacts Mg(2+). Cysteine 206 is subject to Cysteine methyl ester. Cysteine 206 carries S-farnesyl cysteine lipidation. A propeptide spans 207 to 209 (SIM) (removed in mature form).

This sequence belongs to the small GTPase superfamily. Rheb family. As to quaternary structure, interacts with BTN2.

Its subcellular location is the cell membrane. It carries out the reaction GTP + H2O = GDP + phosphate + H(+). In terms of biological role, binds GTP and exhibits intrinsic GTPase activity. Involved in the regulation of arginine and lysine uptake. Acts through the CAN1 permease. This is GTP-binding protein RHB1 (RHB1) from Saccharomyces cerevisiae (strain ATCC 204508 / S288c) (Baker's yeast).